A 317-amino-acid polypeptide reads, in one-letter code: Type II methyltransferase M.NgoBI (317 aa).

In terms of domain architecture, SAM-dependent MTase C5-type spans 2-302; sequence YKTIDLFSGI…KICSLLFPAR (301 aa). The active site involves C71.

This sequence belongs to the class I-like SAM-binding methyltransferase superfamily. C5-methyltransferase family.

It carries out the reaction a 2'-deoxycytidine in DNA + S-adenosyl-L-methionine = a 5-methyl-2'-deoxycytidine in DNA + S-adenosyl-L-homocysteine + H(+). A methylase, recognizes the double-stranded sequence 5'-RGCGCY-3', methylates C-5 on both strands, and protects the DNA from cleavage by the NgoBI endonuclease. The polypeptide is Type II methyltransferase M.NgoBI (ngoBIM) (Neisseria gonorrhoeae).